Reading from the N-terminus, the 469-residue chain is Chromosomal replication initiator protein DnaA (469 aa).

The interval 1-83 is domain I, interacts with DnaA modulators; the sequence is MSEWDYKIFW…KKISIDFIIK (83 aa). The domain II stretch occupies residues 83–128; the sequence is KPNTSEDLSKAENEGGNDKKEDAAKPSSAESKKKSVKTEGGRGQHP. The disordered stretch occupies residues 89 to 131; sequence DLSKAENEGGNDKKEDAAKPSSAESKKKSVKTEGGRGQHPDLR. The segment at 129–344 is domain III, AAA+ region; the sequence is DLRPEYNFED…AALTKLIAYT (216 aa). Residues G173, G175, K176, and T177 each coordinate ATP. Residues 345-469 form a domain IV, binds dsDNA region; it reads ELTKKTMDEA…RNTIKENTNK (125 aa).

This sequence belongs to the DnaA family. In terms of assembly, oligomerizes as a right-handed, spiral filament on DNA at oriC.

It is found in the cytoplasm. Plays an essential role in the initiation and regulation of chromosomal replication. ATP-DnaA binds to the origin of replication (oriC) to initiate formation of the DNA replication initiation complex once per cell cycle. Binds the DnaA box (a 9 base pair repeat at the origin) and separates the double-stranded (ds)DNA. Forms a right-handed helical filament on oriC DNA; dsDNA binds to the exterior of the filament while single-stranded (ss)DNA is stabiized in the filament's interior. The ATP-DnaA-oriC complex binds and stabilizes one strand of the AT-rich DNA unwinding element (DUE), permitting loading of DNA polymerase. After initiation quickly degrades to an ADP-DnaA complex that is not apt for DNA replication. Binds acidic phospholipids. This Treponema denticola (strain ATCC 35405 / DSM 14222 / CIP 103919 / JCM 8153 / KCTC 15104) protein is Chromosomal replication initiator protein DnaA.